Reading from the N-terminus, the 110-residue chain is UPF0060 membrane protein Ping_0587 (110 aa).

A run of 4 helical transmembrane segments spans residues Ile-6–Leu-26, Ser-33–Leu-53, Thr-61–Glu-81, and Met-87–Pro-107.

Belongs to the UPF0060 family.

The protein resides in the cell inner membrane. In Psychromonas ingrahamii (strain DSM 17664 / CCUG 51855 / 37), this protein is UPF0060 membrane protein Ping_0587.